Consider the following 416-residue polypeptide: uncharacterized protein (416 aa).

Zn(2+) is bound by residues His29, Asp31, Glu144, His215, and His236.

This sequence belongs to the metallo-dependent hydrolases superfamily. Peptidase M19 family. The cofactor is Zn(2+).

It carries out the reaction an L-aminoacyl-L-amino acid + H2O = 2 an L-alpha-amino acid. This is an uncharacterized protein from Schizosaccharomyces pombe (strain 972 / ATCC 24843) (Fission yeast).